Reading from the N-terminus, the 143-residue chain is Putative pre-16S rRNA nuclease (143 aa).

The protein belongs to the YqgF nuclease family.

The protein resides in the cytoplasm. Its function is as follows. Could be a nuclease involved in processing of the 5'-end of pre-16S rRNA. The sequence is that of Putative pre-16S rRNA nuclease from Mycoplasma capricolum subsp. capricolum (strain California kid / ATCC 27343 / NCTC 10154).